Here is a 631-residue protein sequence, read N- to C-terminus: Clathrin interactor 1 (631 aa).

The ENTH domain occupies 24–157 (NVVMNYSEIE…QDDDRLREER (134 aa)). Arg37 is an a 1,2-diacyl-sn-glycero-3-phospho-(1D-myo-inositol-4,5-bisphosphate) binding site. Residues 60-62 (FMY) are interaction with VTI1B. A 1,2-diacyl-sn-glycero-3-phospho-(1D-myo-inositol-4,5-bisphosphate) is bound at residue Arg75. Interaction with VTI1B regions lie at residues 102-104 (SER) and 150-161 (DDRLREERKKAK). Residues Ser171, Ser174, Ser213, Ser218, Ser235, Ser253, and Ser307 each carry the phosphoserine modification. Residues 227 to 339 (FRRKDREDSP…SSGDLVDLFD (113 aa)) form a disordered region. Residues 230-247 (KDREDSPERCSDSDEEKK) are compositionally biased toward basic and acidic residues. A compositionally biased stretch (polar residues) spans 308-318 (PDQNASTHTPQ). A Phosphothreonine modification is found at Thr316. The segment covering 319–331 (SSAKPSVPSSKSS) has biased composition (low complexity). 2 positions are modified to phosphoserine: Ser320 and Ser630.

This sequence belongs to the epsin family. In terms of assembly, binds clathrin heavy chain and AP-2. Interacts with VTI1B. Interacts with GGA2 (via GAE domain). Interacts with AP1G1 (via GAE domain). Interacts with AP1G2 (via GAE domain).

It is found in the cytoplasm. Its subcellular location is the perinuclear region. The protein localises to the membrane. It localises to the cytoplasmic vesicle. The protein resides in the clathrin-coated vesicle. In terms of biological role, binds to membranes enriched in phosphatidylinositol 4,5-bisphosphate (PtdIns(4,5)P2). May have a role in transport via clathrin-coated vesicles from the trans-Golgi network to endosomes. Stimulates clathrin assembly. The chain is Clathrin interactor 1 (Clint1) from Mus musculus (Mouse).